Reading from the N-terminus, the 319-residue chain is Pantothenate kinase (319 aa).

97-104 (GSVAVGKS) is a binding site for ATP.

The protein belongs to the prokaryotic pantothenate kinase family.

Its subcellular location is the cytoplasm. The catalysed reaction is (R)-pantothenate + ATP = (R)-4'-phosphopantothenate + ADP + H(+). The protein operates within cofactor biosynthesis; coenzyme A biosynthesis; CoA from (R)-pantothenate: step 1/5. This chain is Pantothenate kinase, found in Mesorhizobium japonicum (strain LMG 29417 / CECT 9101 / MAFF 303099) (Mesorhizobium loti (strain MAFF 303099)).